We begin with the raw amino-acid sequence, 810 residues long: Leucine--tRNA ligase (810 aa).

Residues 43–53 (PYPSGTLHIGH) carry the 'HIGH' region motif. A 'KMSKS' region motif is present at residues 578 to 582 (KMSKS). An ATP-binding site is contributed by Lys-581.

Belongs to the class-I aminoacyl-tRNA synthetase family.

It is found in the cytoplasm. The enzyme catalyses tRNA(Leu) + L-leucine + ATP = L-leucyl-tRNA(Leu) + AMP + diphosphate. The protein is Leucine--tRNA ligase of Solibacter usitatus (strain Ellin6076).